A 1353-amino-acid chain; its full sequence is MSDNRLFTSVETLNLSSPVLEKLKLSGINTLEDFNTFTLEELRLLLQEAFLEVLPILKNFALPRNLQNLDLSEAVINILTELGMEDFQDLLQTKMAVLTKSFETNPLAFQKLNDLFKLYNHFPSISSDKEYGSRDYDYFKIRLAAPEEIRQWSYGEVTSYETINYRTYKPEISGLFCQKIFGPVVDFQCACSKKQVSIKSQFCNKCGVEFTETKVRRERMGHIELQTPIVHTWYLNSSPSRLAILLNIKTKQLEEIVYYVSYVVIDPGKTEFKPKEIITETQYSEALYEFGNTFVALTGAEAVKKLLENLNLEKTIKVLRKSLSENSKQKRESIIKRLEIIESFHQSDNKPEWMVMDVIPVLPPGLRPMVPLDGGRFATTEVNDLYRRILNRNNRLKKQMLQKAPRLIIKNEKRMLQEAVDALFDNTKTSKKNVNNVEKNRPLKSLSEMLRGKQGRFRQNLLGKRVDYSGRSVIIVGPDLEMHQCGVPREMAIILFKPFILKKLQETKGIDKKNANTIYEKMNEEVWNALEEVVKEHPVLLNRAPTLHRLGIQAFDPKLIDGKAIRLHPLVTPAFNADFDGDQMAIYVPLSLEAQAEARLLMLVSNNILDPKNGNPVVTPSQDMVLGNYYLTIEEKKDRTINSYDSAQRTAEHQFKHRNEGTFFADINEAKTAYQNKEIHLHTRIFIKPQTINLSFTEEQRQKYLMTTLGKLIFNDILPPSFPYINEPTQFNLDVKTPDAYFLPPGTNPKQFLKKLPTPKPFNKKFLSMIIACFFKQMKITETSKMLDHIKNLGFKYSTIAGITVSFADINTYSNKQELLQEVETRNIQIETWHKDGFLTDAERRRLVINEWKTIRDEIQEGLMKEFKQDNHIFMMSESGARGSVSNFTQLAGMRGLMNNPKGEIIEVPVKASFREGLKVSEFFISTHGARKGSTDTALKTAESGYLTRRLVDVTQDIVVIKEDCNSDRGFIVEAMMSDGKEIVSLKKRIMGRFASCDICHPKTNTLIVARNELIIESKAQEIITAKIKKVPIRSILTCNCEYGICAKDYGVNLATNKLVEIGEAVGVIAAQSIGEPGTQLTMRTFHTGGVASASDITQGLPRIEELFEVRKPKGKALISELKGKIKKIDKIRSQNPEIVITEENDPDTEHRYILEPNVDILVSKNNIVYPGQKLTSGSVDLKELLRVAGTTEVQKYILEEVQKVYRAQNVYISDKHIEIIIHQMFKQILIIDEGDTHLLPGTEITINKFKKANLKMLEEKKRLAVGRPIILGITRSSLRSDSLLSAASFQETTKILIDAAIKGKTDHLYGLKENVIIGGLIPAGTGILETTLFKYPKEPATTSELTKKTNQN.

A unknown region spans residues 1 to 117 (MSDNRLFTSV…AFQKLNDLFK (117 aa)). The tract at residues 118-1353 (LYNHFPSISS…SELTKKTNQN (1236 aa)) is DNA-directed RNA polymerase subunit beta'. 4 residues coordinate Zn(2+): cysteine 189, cysteine 191, cysteine 203, and cysteine 206. The Mg(2+) site is built by aspartate 578, aspartate 580, and aspartate 582.

Belongs to the RNA polymerase beta' chain family. In terms of assembly, the RNAP catalytic core consists of 2 alpha, 1 beta, 1 beta' and 1 omega subunit. When a sigma factor is associated with the core the holoenzyme is formed, which can initiate transcription. Mg(2+) serves as cofactor. Requires Zn(2+) as cofactor.

It carries out the reaction RNA(n) + a ribonucleoside 5'-triphosphate = RNA(n+1) + diphosphate. DNA-dependent RNA polymerase catalyzes the transcription of DNA into RNA using the four ribonucleoside triphosphates as substrates. This Aster yellows witches'-broom phytoplasma (strain AYWB) protein is DNA-directed RNA polymerase subunit beta'.